Reading from the N-terminus, the 310-residue chain is N-acetyl-gamma-glutamyl-phosphate reductase (310 aa).

Residue Cys-117 is part of the active site.

It belongs to the NAGSA dehydrogenase family. Type 2 subfamily.

It localises to the cytoplasm. The catalysed reaction is N-acetyl-L-glutamate 5-semialdehyde + phosphate + NADP(+) = N-acetyl-L-glutamyl 5-phosphate + NADPH + H(+). Its pathway is amino-acid biosynthesis; L-arginine biosynthesis; N(2)-acetyl-L-ornithine from L-glutamate: step 3/4. In terms of biological role, catalyzes the NADPH-dependent reduction of N-acetyl-5-glutamyl phosphate to yield N-acetyl-L-glutamate 5-semialdehyde. This Rhizobium johnstonii (strain DSM 114642 / LMG 32736 / 3841) (Rhizobium leguminosarum bv. viciae) protein is N-acetyl-gamma-glutamyl-phosphate reductase.